We begin with the raw amino-acid sequence, 886 residues long: General transcription factor 3C polypeptide 3 (886 aa).

The tract at residues 1-121 (MSGFSPELID…TPEQPTAGDV (121 aa)) is disordered. Serine 2 is modified (N-acetylserine). Residues 12–44 (LEGKISFEEFERRREERKTREKKSLQEKGKLSA) show a composition bias toward basic and acidic residues. Serine 43 carries the phosphoserine modification. The segment covering 53–63 (VPSSSGINSTK) has biased composition (polar residues). Residues 92–113 (ENEDDEEEEEEEEEEEEEEETP) are compositionally biased toward acidic residues. TPR repeat units follow at residues 149 to 182 (LRGLMGEANIRFARGEREEAILMCMEIIRQAPLA), 183 to 216 (YEPFSTLAMIYEDQGDMEKSLQFELIAAHLNPSD), 217 to 250 (TEEWVRLAEMSLEQDNIKQAIFCYTKALKYEPTN), 252 to 284 (RYLWERSSLYEQMGDHKMAMDGYRRILNLLSPS), 290 to 323 (MQLARDMAKSYYEANDVTSAINIIDEAFSKHQGL), 326 to 361 (MEDVNIAAELYISNKQYDKALEIITDFSGIVLEKKT), 421 to 454 (GDLYLDVAEAFLDVGEYNSALPLLSALVCSERYN), 456 to 489 (AVVWLRHAECLKALGYMERAAESYGKVVDLAPLH), 491 to 523 (DARISLSTLQQQLGQPEKALEALEPMYDPDTLA), 733 to 766 (HALCVLNGHNAFVSGSFKHALGQYVQAFRTHPDE), and 811 to 844 (QESFYNLGRGLHQLGLIHLAIHYYQKALELPPLV). Serine 282 carries the phosphoserine modification.

Part of the TFIIIC subcomplex TFIIIC2, consisting of six subunits, GTF3C1, GTF3C2, GTF3C3, GTF3C4, GTF3C5 and GTF3C6. Interacts with BRF1 and TBP.

The protein localises to the nucleus. In terms of biological role, involved in RNA polymerase III-mediated transcription. Integral, tightly associated component of the DNA-binding TFIIIC2 subcomplex that directly binds tRNA and virus-associated RNA promoters. In Homo sapiens (Human), this protein is General transcription factor 3C polypeptide 3 (GTF3C3).